The primary structure comprises 590 residues: Protein Spindly (590 aa).

The stretch at Met1–Glu401 forms a coiled coil. Positions Asn446–Gln590 are disordered. Basic and acidic residues-rich tracts occupy residues Ser483–Glu497 and Arg518–Glu527. 2 stretches are compositionally biased toward polar residues: residues Val541–Gln554 and Gln572–Gln590.

Belongs to the Spindly family.

The protein resides in the chromosome. The protein localises to the centromere. It localises to the kinetochore. Required for the localization of dynein and dynactin to the mitotic kintochore. Dynein is believed to control the initial lateral interaction between the kinetochore and spindle microtubules and to facilitate the subsequent formation of end-on kinetochore-microtubule attachments mediated by the NDC80 complex. May act as an adapter protein linking the dynein motor complex to various cargos. The sequence is that of Protein Spindly (spdl1) from Danio rerio (Zebrafish).